We begin with the raw amino-acid sequence, 528 residues long: Calcium-dependent protein kinase 4 (528 aa).

A disordered region spans residues 1–36; sequence MGQEVSSVNNTKNEHHKTNKKSLKGGNERHEMKESS. G2 carries N-myristoyl glycine lipidation. Basic residues predominate over residues 14 to 23; sequence EHHKTNKKSL. Positions 71-329 constitute a Protein kinase domain; the sequence is KGIKILGKGS…RDALEHEWIK (259 aa). ATP is bound by residues 76–84 and K99; that span reads LGKGSFGEV. Catalysis depends on D193, which acts as the Proton acceptor. The J domain autoinhibitory motif signature appears at 350–358; that stretch reads NIRQFQSTQ. The tract at residues 350–386 is j domain; the sequence is NIRQFQSTQKLAQAALLYMGSKLTTIDETKELTKIFK. Positions 359 to 368 match the J domain EF-hand interaction motif motif; that stretch reads KLAQAALLYM. 4 EF-hand domains span residues 376–411, 427–458, 459–494, and 496–528; these read DETKELTKIFKKMDKNGDGQLDRNELIIGYKELLKL, EVDQILNSIDLDQNGYIEYSEFLTVSIDRKLL, LSTERLEKAFKLFDKDGSGKISANELAQLFGLSDVS, and ECWKTVLKEVDQNNDGEIDFKEFRDMLVKLCNY. Residues D389, N391, D393, Q395, E400, D436, D438, N440, Y442, E447, D472, D474, S476, K478, E483, D506, N508, D510, E512, and E517 each contribute to the Ca(2+) site.

The protein belongs to the protein kinase superfamily. Ser/Thr protein kinase family. CDPK subfamily. May interact with the pre-replication MCM complex prior male gametogenesis activation. Mg(2+) serves as cofactor. Post-translationally, myristoylated; myristoylation may target it to different subcellular compartments. During male gametogenesis, myristoylation is required to initiate DNA replication but not for mitotic spindle assembly or axoneme activation. In terms of processing, not palmitoylated. May be autophosphorylated on Thr-234 in vitro.

It is found in the cytoplasm. It localises to the cell membrane. It catalyses the reaction L-seryl-[protein] + ATP = O-phospho-L-seryl-[protein] + ADP + H(+). It carries out the reaction L-threonyl-[protein] + ATP = O-phospho-L-threonyl-[protein] + ADP + H(+). Its activity is regulated as follows. Activated by calcium. Upon calcium binding to the EF-hand domains, the C-terminus of the junction domain (J domain) undergoes a conformational change which results in the dissociation of the pseudo-substrate inhibitory motif from the catalytic domain. This, in turn, may facilitate the autophosphorylation of the activation loop at Thr-234, which leads to the kinase activation. Intracellular calcium increase is triggered by xanthurenic acid (XA), a small mosquito molecule that induces the differentiation of specialized transmission stages, the gametocytes, into male and female gametes. Activated by a decrease in temperature (20 degrees Celsius) and an increase in pH (7.6) occurring when the parasite is ingested by in the mosquito. In terms of biological role, calcium-dependent protein kinase which acts as a sensor and effector of intracellular Ca(2+) levels probably in part downstream of cGMP-activated PKG kinase. Plays a central role in the host erythrocytes and hepatocytes infection cycles, sexual reproduction and mosquito transmission of the parasite. During the liver stage, involved in sporozoite motility and thus in sporozoite invasion of host hepatocytes, probably together with CDPK1 and CDPK5. Involved in merosome egress from host hepatocytes, probably together with CDPK5. During the asexual blood stage, involved in merozoite invasion of host erythrocytes and motility by stabilizing the inner membrane complex, a structure below the plasma membrane which acts as an anchor for the glidosome, an acto-myosin motor. Required for cell cycle progression in the male gametocyte. During male gametogenesis in the mosquito gut, required to initiate the first round of DNA replication, probably by facilitating the assembly of the pre-replicative MCM complex, to assemble the first mitotic spindle and, at the end of gametogenesis, to initiate axoneme motility, cytokinesis and subsequent exflagellation. For each of these steps, may phosphorylate SOC1, SOC2 and SOC3, respectively. Together with CDPK1, regulates ookinete gliding in the mosquito host midgut. The polypeptide is Calcium-dependent protein kinase 4 (Plasmodium falciparum (isolate 3D7)).